The chain runs to 250 residues: Tetrathionate reductase subunit B (250 aa).

Positions 1–33 (MWTGVNMDSSKRQFLQQLGVLTAGASLVPLAEA) form a signal peptide, tat-type signal. 4Fe-4S ferredoxin-type domains follow at residues 50-79 (YAML…PQGA), 97-128 (VTNV…QRED), and 129-158 (GIVV…INHE). Positions 59, 62, 65, 69, 106, 109, 114, 118, 138, 141, 144, 148, 165, 168, 180, and 184 each coordinate [4Fe-4S] cluster.

As to quaternary structure, probably composed of three subunits: TtrA, TtrB and TtrC. Post-translationally, predicted to be exported by the Tat system. The position of the signal peptide cleavage has not been experimentally proven.

It localises to the periplasm. The protein resides in the cell inner membrane. In terms of biological role, part of a membrane-bound tetrathionate reductase that catalyzes the reduction of tetrathionate to thiosulfate. TtrB is probably involved in transfer of electrons from TtrC to TtrA. During mice infection, the ability to use tetrathionate as an electron acceptor is a growth advantage for S.typhimurium over the competing microbiota in the lumen of the inflamed gut. The protein is Tetrathionate reductase subunit B (ttrB) of Salmonella typhimurium (strain LT2 / SGSC1412 / ATCC 700720).